We begin with the raw amino-acid sequence, 618 residues long: Paraneoplastic antigen-like protein 5 (618 aa).

The segment covering A390–S399 has biased composition (basic and acidic residues). 3 disordered regions span residues A390–E409, R451–Q475, and S519–M549.

It belongs to the PNMA family. Restricted to testis, where expression is low. Not detected in the brain.

It localises to the nucleus. The protein is Paraneoplastic antigen-like protein 5 (Pnma5) of Mus musculus (Mouse).